The sequence spans 290 residues: Acetyl-coenzyme A carboxylase carboxyl transferase subunit beta (290 aa).

The 263-residue stretch at 28-290 (VMTKCPQCKK…KGGEEGWWRN (263 aa)) folds into the CoA carboxyltransferase N-terminal domain. Residues C32, C35, C51, and C54 each coordinate Zn(2+). The C4-type zinc-finger motif lies at 32–54 (CPQCKKIMYTKELIKNLRVCLSC).

Belongs to the AccD/PCCB family. In terms of assembly, acetyl-CoA carboxylase is a heterohexamer composed of biotin carboxyl carrier protein (AccB), biotin carboxylase (AccC) and two subunits each of ACCase subunit alpha (AccA) and ACCase subunit beta (AccD). Requires Zn(2+) as cofactor.

Its subcellular location is the cytoplasm. The enzyme catalyses N(6)-carboxybiotinyl-L-lysyl-[protein] + acetyl-CoA = N(6)-biotinyl-L-lysyl-[protein] + malonyl-CoA. It functions in the pathway lipid metabolism; malonyl-CoA biosynthesis; malonyl-CoA from acetyl-CoA: step 1/1. In terms of biological role, component of the acetyl coenzyme A carboxylase (ACC) complex. Biotin carboxylase (BC) catalyzes the carboxylation of biotin on its carrier protein (BCCP) and then the CO(2) group is transferred by the transcarboxylase to acetyl-CoA to form malonyl-CoA. This chain is Acetyl-coenzyme A carboxylase carboxyl transferase subunit beta, found in Geobacillus kaustophilus (strain HTA426).